Reading from the N-terminus, the 298-residue chain is Porphobilinogen deaminase (298 aa).

Position 239 is an S-(dipyrrolylmethanemethyl)cysteine (cysteine 239).

The protein belongs to the HMBS family. As to quaternary structure, monomer. Dipyrromethane is required as a cofactor.

It catalyses the reaction 4 porphobilinogen + H2O = hydroxymethylbilane + 4 NH4(+). It functions in the pathway porphyrin-containing compound metabolism; protoporphyrin-IX biosynthesis; coproporphyrinogen-III from 5-aminolevulinate: step 2/4. In terms of biological role, tetrapolymerization of the monopyrrole PBG into the hydroxymethylbilane pre-uroporphyrinogen in several discrete steps. The protein is Porphobilinogen deaminase of Ehrlichia canis (strain Jake).